A 248-amino-acid chain; its full sequence is 2,3-bisphosphoglycerate-dependent phosphoglycerate mutase (248 aa).

Substrate is bound by residues 8 to 15 (RHGESAWN), 21 to 22 (TG), arginine 60, 87 to 90 (EKHY), lysine 98, 114 to 115 (RR), and 183 to 184 (GN). Residue histidine 9 is the Tele-phosphohistidine intermediate of the active site. Glutamate 87 serves as the catalytic Proton donor/acceptor.

Belongs to the phosphoglycerate mutase family. BPG-dependent PGAM subfamily.

It carries out the reaction (2R)-2-phosphoglycerate = (2R)-3-phosphoglycerate. Its pathway is carbohydrate degradation; glycolysis; pyruvate from D-glyceraldehyde 3-phosphate: step 3/5. Catalyzes the interconversion of 2-phosphoglycerate and 3-phosphoglycerate. The protein is 2,3-bisphosphoglycerate-dependent phosphoglycerate mutase of Bacteroides fragilis (strain ATCC 25285 / DSM 2151 / CCUG 4856 / JCM 11019 / LMG 10263 / NCTC 9343 / Onslow / VPI 2553 / EN-2).